Consider the following 85-residue polypeptide: MAHKKAGGSTRNGRDSESKRLGVKRFGGESVLAGNIIVRQRGTQFHAGNNVGLGKDHTLFALTDGKVKFEVKGPKNRKFVSIEAE.

A disordered region spans residues 1–22 (MAHKKAGGSTRNGRDSESKRLG).

The protein belongs to the bacterial ribosomal protein bL27 family.

The sequence is that of Large ribosomal subunit protein bL27 from Vibrio vulnificus (strain CMCP6).